Reading from the N-terminus, the 436-residue chain is MLADEVIELLGQEISKNEMENYISQIKFNEKSSNSENIIFTAPNELVTKFIQTRYANKIANIFEVKTGIKPVISITTQKNRVSIKAKDIDVKQIRTQSSLLNPSYTFESFVVGDSNQFAYISSQQAAQNPGKVYNPLFIYGSTGLGKTHLLQSIGNYCLEHGKTVICVTSEQFMSDFIRNVENRTMNKFKEKYRNCDILLIDDIQFFHKSEKTQEEFFHTFNEIHAKKGQIVMTSDKPPKMLKGFEERLKSRFEWGLMADITPPELDTKIRIIKAKCEFDGINLSSDIIEYIATNMGDNIREIESAIININAFANIMRQEITLEFAKNVIKDQIKEKKDNISLENIISCVSHEMNIKPSDIKSKSRTKGIVEARRICIYLAKTLTPNSMPQLATHFGLKDHSAVSHNIKKINEIINNDGYFKARVEELKNKITSKE.

Positions 1 to 69 (MLADEVIELL…ANIFEVKTGI (69 aa)) are domain I, interacts with DnaA modulators. Positions 69-99 (IKPVISITTQKNRVSIKAKDIDVKQIRTQSS) are domain II. The segment at 100–314 (LLNPSYTFES…SAIININAFA (215 aa)) is domain III, AAA+ region. Residues G144, G146, K147, and T148 each coordinate ATP. A domain IV, binds dsDNA region spans residues 315-436 (NIMRQEITLE…ELKNKITSKE (122 aa)).

This sequence belongs to the DnaA family. Oligomerizes as a right-handed, spiral filament on DNA at oriC.

Its subcellular location is the cytoplasm. Its function is as follows. Plays an essential role in the initiation and regulation of chromosomal replication. ATP-DnaA binds to the origin of replication (oriC) to initiate formation of the DNA replication initiation complex once per cell cycle. Binds the DnaA box (a 9 base pair repeat at the origin) and separates the double-stranded (ds)DNA. Forms a right-handed helical filament on oriC DNA; dsDNA binds to the exterior of the filament while single-stranded (ss)DNA is stabiized in the filament's interior. The ATP-DnaA-oriC complex binds and stabilizes one strand of the AT-rich DNA unwinding element (DUE), permitting loading of DNA polymerase. After initiation quickly degrades to an ADP-DnaA complex that is not apt for DNA replication. Binds acidic phospholipids. This chain is Chromosomal replication initiator protein DnaA, found in Campylobacter fetus subsp. fetus (strain 82-40).